A 399-amino-acid polypeptide reads, in one-letter code: Probable aspartate/prephenate aminotransferase (399 aa).

Residues G39, W125, and N175 each coordinate L-aspartate. Position 239 is an N6-(pyridoxal phosphate)lysine (K239). R375 is an L-aspartate binding site.

The protein belongs to the class-I pyridoxal-phosphate-dependent aminotransferase family. In terms of assembly, homodimer. Pyridoxal 5'-phosphate is required as a cofactor.

It is found in the cytoplasm. It carries out the reaction L-aspartate + 2-oxoglutarate = oxaloacetate + L-glutamate. The catalysed reaction is L-arogenate + 2-oxoglutarate = prephenate + L-glutamate. In terms of biological role, catalyzes the reversible conversion of aspartate and 2-oxoglutarate to glutamate and oxaloacetate. Can also transaminate prephenate in the presence of glutamate. This Rickettsia typhi (strain ATCC VR-144 / Wilmington) protein is Probable aspartate/prephenate aminotransferase (aatA).